Consider the following 243-residue polypeptide: 1-(5-phosphoribosyl)-5-[(5-phosphoribosylamino)methylideneamino] imidazole-4-carboxamide isomerase (243 aa).

The Proton acceptor role is filled by D10. Catalysis depends on D129, which acts as the Proton donor.

It belongs to the HisA/HisF family.

The protein resides in the cytoplasm. The enzyme catalyses 1-(5-phospho-beta-D-ribosyl)-5-[(5-phospho-beta-D-ribosylamino)methylideneamino]imidazole-4-carboxamide = 5-[(5-phospho-1-deoxy-D-ribulos-1-ylimino)methylamino]-1-(5-phospho-beta-D-ribosyl)imidazole-4-carboxamide. Its pathway is amino-acid biosynthesis; L-histidine biosynthesis; L-histidine from 5-phospho-alpha-D-ribose 1-diphosphate: step 4/9. This chain is 1-(5-phosphoribosyl)-5-[(5-phosphoribosylamino)methylideneamino] imidazole-4-carboxamide isomerase, found in Saccharopolyspora erythraea (strain ATCC 11635 / DSM 40517 / JCM 4748 / NBRC 13426 / NCIMB 8594 / NRRL 2338).